The sequence spans 148 residues: Large ribosomal subunit protein uL11 (148 aa).

Belongs to the universal ribosomal protein uL11 family. In terms of assembly, part of the ribosomal stalk of the 50S ribosomal subunit. Interacts with L10 and the large rRNA to form the base of the stalk. L10 forms an elongated spine to which L12 dimers bind in a sequential fashion forming a multimeric L10(L12)X complex. In terms of processing, one or more lysine residues are methylated.

Forms part of the ribosomal stalk which helps the ribosome interact with GTP-bound translation factors. The chain is Large ribosomal subunit protein uL11 from Myxococcus xanthus (strain DK1622).